The chain runs to 210 residues: ATP-dependent Clp protease proteolytic subunit (210 aa).

Ser113 acts as the Nucleophile in catalysis. His138 is an active-site residue.

It belongs to the peptidase S14 family. As to quaternary structure, fourteen ClpP subunits assemble into 2 heptameric rings which stack back to back to give a disk-like structure with a central cavity, resembling the structure of eukaryotic proteasomes.

The protein localises to the cytoplasm. The enzyme catalyses Hydrolysis of proteins to small peptides in the presence of ATP and magnesium. alpha-casein is the usual test substrate. In the absence of ATP, only oligopeptides shorter than five residues are hydrolyzed (such as succinyl-Leu-Tyr-|-NHMec, and Leu-Tyr-Leu-|-Tyr-Trp, in which cleavage of the -Tyr-|-Leu- and -Tyr-|-Trp bonds also occurs).. In terms of biological role, cleaves peptides in various proteins in a process that requires ATP hydrolysis. Has a chymotrypsin-like activity. Plays a major role in the degradation of misfolded proteins. This Marinomonas sp. (strain MWYL1) protein is ATP-dependent Clp protease proteolytic subunit.